We begin with the raw amino-acid sequence, 183 residues long: uncharacterized protein (183 aa).

Residues 1–182 (MIKVVKGDIT…KALKIVGQGG (182 aa)) form the Macro domain.

This is an uncharacterized protein from Pyrococcus furiosus (strain ATCC 43587 / DSM 3638 / JCM 8422 / Vc1).